The following is a 151-amino-acid chain: C-C motif chemokine 25 (151 aa).

The first 22 residues, 1–22 (MNLWLLVCLVASLMGAWSTVHT), serve as a signal peptide directing secretion. 2 cysteine pairs are disulfide-bonded: C29-C57 and C30-C73. Residues 94–151 (THSKQHLGSRRNLQDSHLGGQRSNTGMSRLAHSKSKSSRSTRSNKKKTSFLNMANPGP) are disordered. Over residues 124–141 (AHSKSKSSRSTRSNKKKT) the composition is skewed to basic residues.

This sequence belongs to the intercrine beta (chemokine CC) family.

The protein localises to the secreted. Potentially involved in T-cell development. Recombinant protein shows chemotactic activity on thymocytes, macrophages, THP-1 cells, and dendritics cells but is inactive on peripheral blood lymphocytes and neutrophils. Binds to CCR9. Binds to atypical chemokine receptor ACKR4 and mediates the recruitment of beta-arrestin (ARRB1/2) to ACKR4. The sequence is that of C-C motif chemokine 25 (CCL25) from Canis lupus familiaris (Dog).